The sequence spans 115 residues: NTF2-related export protein 1 (115 aa).

An NTF2 domain is found at 7-115; the sequence is YAQEFVQRYY…LVLRSSTNFL (109 aa).

The protein localises to the nucleus. Its function is as follows. Stimulator of protein export for NES-containing proteins. Also plays a role in mRNA nuclear export. The polypeptide is NTF2-related export protein 1 (nxt1) (Schizosaccharomyces pombe (strain 972 / ATCC 24843) (Fission yeast)).